The primary structure comprises 555 residues: Protein NRT1/ PTR FAMILY 5.4 (555 aa).

Helical transmembrane passes span 18–38 and 62–82; these read AALF…GLAS and WIGV…SILG. The residue at position 86 (Thr-86) is a Phosphothreonine. A run of 10 helical transmembrane segments spans residues 87–107, 116–136, 159–179, 187–207, 311–331, 348–368, 392–412, 435–455, 470–490, and 516–536; these read VLLT…SVTV, VFFM…PCVM, NYWY…LIFI, LGFS…LIGI, IPIW…NTFF, IPPA…IPLY, IGVG…VEAK, LWLL…IVGM, IGAA…TGII, and YYYW…LFIA.

Belongs to the major facilitator superfamily. Proton-dependent oligopeptide transporter (POT/PTR) (TC 2.A.17) family. Expressed in roots and flowers.

It localises to the membrane. The polypeptide is Protein NRT1/ PTR FAMILY 5.4 (NPF5.4) (Arabidopsis thaliana (Mouse-ear cress)).